The chain runs to 387 residues: 3-ketoacyl-CoA thiolase (387 aa).

Catalysis depends on Cys-91, which acts as the Acyl-thioester intermediate. Active-site proton acceptor residues include His-343 and Cys-373.

Belongs to the thiolase-like superfamily. Thiolase family. In terms of assembly, heterotetramer of two alpha chains (FadB) and two beta chains (FadA).

It localises to the cytoplasm. The enzyme catalyses an acyl-CoA + acetyl-CoA = a 3-oxoacyl-CoA + CoA. It functions in the pathway lipid metabolism; fatty acid beta-oxidation. Functionally, catalyzes the final step of fatty acid oxidation in which acetyl-CoA is released and the CoA ester of a fatty acid two carbons shorter is formed. The protein is 3-ketoacyl-CoA thiolase of Yersinia pseudotuberculosis serotype O:1b (strain IP 31758).